A 500-amino-acid chain; its full sequence is L-arabinose isomerase (500 aa).

Mn(2+) is bound by residues Glu306, Glu333, His350, and His450.

It belongs to the arabinose isomerase family. In terms of assembly, homohexamer. Mn(2+) is required as a cofactor.

The enzyme catalyses beta-L-arabinopyranose = L-ribulose. It functions in the pathway carbohydrate degradation; L-arabinose degradation via L-ribulose; D-xylulose 5-phosphate from L-arabinose (bacterial route): step 1/3. Functionally, catalyzes the conversion of L-arabinose to L-ribulose. The polypeptide is L-arabinose isomerase (Yersinia pestis bv. Antiqua (strain Nepal516)).